Reading from the N-terminus, the 236-residue chain is Uridylate kinase (236 aa).

Residue 11–14 coordinates ATP; that stretch reads KFSG. A UMP-binding site is contributed by Gly53. 2 residues coordinate ATP: Gly54 and Arg58. Residues Asp73 and 134 to 141 each bind UMP; that span reads TGSPFFTT. Thr161, Tyr167, and Asp170 together coordinate ATP.

Belongs to the UMP kinase family. In terms of assembly, homohexamer.

The protein localises to the cytoplasm. It catalyses the reaction UMP + ATP = UDP + ADP. It functions in the pathway pyrimidine metabolism; CTP biosynthesis via de novo pathway; UDP from UMP (UMPK route): step 1/1. Its activity is regulated as follows. Inhibited by UTP. Functionally, catalyzes the reversible phosphorylation of UMP to UDP. The polypeptide is Uridylate kinase (Hydrogenovibrio crunogenus (strain DSM 25203 / XCL-2) (Thiomicrospira crunogena)).